Reading from the N-terminus, the 103-residue chain is Small ribosomal subunit protein uS10 (103 aa).

It belongs to the universal ribosomal protein uS10 family. As to quaternary structure, part of the 30S ribosomal subunit.

Its function is as follows. Involved in the binding of tRNA to the ribosomes. The sequence is that of Small ribosomal subunit protein uS10 from Psychrobacter arcticus (strain DSM 17307 / VKM B-2377 / 273-4).